The chain runs to 510 residues: DAP3-binding cell death enhancer 1 (510 aa).

A mitochondrion-targeting transit peptide spans 1–23; that stretch reads MWRLTGILGRALPRLLGPGFRGI. Disordered stretches follow at residues 19-61 and 142-185; these read GFRG…SRDP and VLPR…SGLL. Residues 24 to 101 constitute a propeptide, extended MTS; it reads TPKPTSSDGS…AVLALHLARQ (78 aa). A compositionally biased stretch (low complexity) spans 35–45; the sequence is TTSPTLPLTRL. 2 stretches are compositionally biased toward basic and acidic residues: residues 46-61 and 155-167; these read SFDR…SRDP and GLRE…EDHP. Positions 169-181 are enriched in polar residues; it reads APSQCLPSDSSLR. TPR repeat units lie at residues 213 to 245, 246 to 278, 279 to 313, 314 to 351, 352 to 385, 386 to 423, and 471 to 499; these read AHPP…QLSV, AITF…RGYS, KAQY…VQGH, SLAQ…DSGL, TEAQ…SNGD, SQSR…GNEP, and ASST…TIPS. Residues 307 to 326 carry the SIFI-degron motif; the sequence is LAAVQGHSLAQYRYARCLLQ.

The protein belongs to the DELE1 family. As to quaternary structure, interacts with DAP3. In terms of assembly, interacts (via TPR repeats) with EIF2AK1/HRI; activating the protein kinase activity of EIF2AK1/HRI, thereby promoting the integrated stress response (ISR). Homooctamer; oligomerization is required to activate EIF2AK1/HRI. Interacts (via TPR repeats) with EIF2AK1/HRI; activating the protein kinase activity of EIF2AK1/HRI, thereby promoting the integrated stress response (ISR). Post-translationally, unstable protein in absence of stress: imported in the mitochondrial matrix following processing by the mitochondrial-processing peptidase (MPP), where it is degraded by LONP1. Stabilized in response to iron deficiency: iron deficiency impairs mitochondrial import, promoting localization at the mitochondrial surface and stabilization. Cleaved by OMA1 in response to mitochondrial stress, generating the DAP3-binding cell death enhancer 1 short form (DELE1(S) or S-DELE1) that accumulates in the cytosol and activates the protein kinase activity of EIF2AK1/HRI. Protein cleavage by OMA1 can take place at different positions, and apparently does not require a specific sequence motif. Ubiquitinated and degraded by the SIFI complex once the mitochondrial stress has been resolved, thereby providing stress response silencing. Within the SIFI complex, UBR4 initiates ubiquitin chain that are further elongated or branched by KCMF1.

The protein resides in the mitochondrion. The protein localises to the mitochondrion outer membrane. It localises to the mitochondrion inner membrane. It is found in the cytoplasm. Its subcellular location is the cytosol. In terms of biological role, protein kinase activator that acts as a key activator of the integrated stress response (ISR) following various stresses, such as iron deficiency, mitochondrial stress or mitochondrial DNA breaks. Detects impaired protein import and processing in mitochondria, activating the ISR. May also required for the induction of death receptor-mediated apoptosis through the regulation of caspase activation. Functionally, protein kinase activator that activates the ISR in response to iron deficiency: iron deficiency impairs mitochondrial import, promoting DELE1 localization at the mitochondrial surface, where it binds and activates EIF2AK1/HRI to trigger the ISR. Protein kinase activator generated by protein cleavage in response to mitochondrial stress, which accumulates in the cytosol and specifically binds to and activates the protein kinase activity of EIF2AK1/HRI. It thereby activates the integrated stress response (ISR): EIF2AK1/HRI activation promotes eIF-2-alpha (EIF2S1) phosphorylation, leading to a decrease in global protein synthesis and the induction of selected genes, including the transcription factor ATF4, the master transcriptional regulator of the ISR. Also acts as an activator of PRKN-independent mitophagy: activates the protein kinase activity of EIF2AK1/HRI in response to mitochondrial damage, promoting eIF-2-alpha (EIF2S1) phosphorylation, leading to mitochondrial localization of EIF2S1 followed by induction of mitophagy. The polypeptide is DAP3-binding cell death enhancer 1 (Mus musculus (Mouse)).